The primary structure comprises 297 residues: D-aminoacyl-tRNA deacylase (297 aa).

The protein belongs to the DtdA deacylase family. In terms of assembly, monomer. The cofactor is Zn(2+).

The enzyme catalyses a D-aminoacyl-tRNA + H2O = a tRNA + a D-alpha-amino acid + H(+). It catalyses the reaction glycyl-tRNA(Ala) + H2O = tRNA(Ala) + glycine + H(+). Functionally, D-aminoacyl-tRNA deacylase with broad substrate specificity. By recycling D-aminoacyl-tRNA to D-amino acids and free tRNA molecules, this enzyme counteracts the toxicity associated with the formation of D-aminoacyl-tRNA entities in vivo. This Methanosarcina mazei (strain ATCC BAA-159 / DSM 3647 / Goe1 / Go1 / JCM 11833 / OCM 88) (Methanosarcina frisia) protein is D-aminoacyl-tRNA deacylase.